We begin with the raw amino-acid sequence, 319 residues long: Serine acetyltransferase, plasmid (319 aa).

It belongs to the transferase hexapeptide repeat family.

It is found in the cytoplasm. The enzyme catalyses L-serine + acetyl-CoA = O-acetyl-L-serine + CoA. It functions in the pathway amino-acid biosynthesis; L-cysteine biosynthesis; L-cysteine from L-serine: step 1/2. This chain is Serine acetyltransferase, plasmid (srpH), found in Synechococcus elongatus (strain ATCC 33912 / PCC 7942 / FACHB-805) (Anacystis nidulans R2).